The chain runs to 112 residues: Large ribosomal subunit protein uL22 (112 aa).

This sequence belongs to the universal ribosomal protein uL22 family. Part of the 50S ribosomal subunit.

This protein binds specifically to 23S rRNA; its binding is stimulated by other ribosomal proteins, e.g. L4, L17, and L20. It is important during the early stages of 50S assembly. It makes multiple contacts with different domains of the 23S rRNA in the assembled 50S subunit and ribosome. Functionally, the globular domain of the protein is located near the polypeptide exit tunnel on the outside of the subunit, while an extended beta-hairpin is found that lines the wall of the exit tunnel in the center of the 70S ribosome. The sequence is that of Large ribosomal subunit protein uL22 from Legionella pneumophila subsp. pneumophila (strain Philadelphia 1 / ATCC 33152 / DSM 7513).